We begin with the raw amino-acid sequence, 140 residues long: UPF0102 protein Ppro_1186 (140 aa).

The segment at 1–27 (MKRPGDGRQESPSSTARPDNRNTGSRG) is disordered. The segment covering 10-25 (ESPSSTARPDNRNTGS) has biased composition (polar residues).

It belongs to the UPF0102 family.

In Pelobacter propionicus (strain DSM 2379 / NBRC 103807 / OttBd1), this protein is UPF0102 protein Ppro_1186.